Here is a 132-residue protein sequence, read N- to C-terminus: Ubiquinol-cytochrome c reductase complex assembly factor 4 (132 aa).

The first 15 residues, 1–15 (MNRVLCAPAAGAVRA), serve as a signal peptide directing secretion. The Mitochondrial matrix portion of the chain corresponds to 16-78 (LRLIGWASRS…GKGHQRPWWK (63 aa)). The tract at residues 29–72 (LPGSRDRAHPAAEEEDDPDRPIEFSSSKANPHRWSVGHTMGKGH) is disordered. A helical membrane pass occupies residues 79-95 (VLPLSCFLVALIIWCYL). At 96–132 (REESEADQWLRQVWGEVPEPSDRSEEPETPAAYRART) the chain is on the mitochondrial intermembrane side. Residues 110–132 (GEVPEPSDRSEEPETPAAYRART) are disordered.

This sequence belongs to the UQCC4 family. Forms a complex, named COMB/coordinator of mitochondrial CYTB biogenesis, composed of UQCC1, UQCC2, UQCC4, UQCC5 and UQCC6; stabilizes nascent cytochrome b/MT-CYB and promotes its membrane insertion. Forms a complex, named COMA, composed of UQCC1, UQCC2 and UQCC4; activates MT-CYB translation. Forms a complex, named COMC, composed of UQCC1, UQCC2; UQCC3 and UQCC4; mediates MT-CYB hemylation and association with the first nuclear-encoded complex III subunit UQCRQ. Complexes COMA and COMB are bound to the mitochondrion inner membrane by UQCC4.

The protein localises to the mitochondrion inner membrane. Functionally, required for the assembly and stability of the mitochondrial ubiquinol-cytochrome c reductase complex (complex III (CIII) or cytochrome b-c1 complex), a multisubunit transmembrane complex that is part of the mitochondrial electron transport chain (ETC) which drives oxidative phosphorylation. The chain is Ubiquinol-cytochrome c reductase complex assembly factor 4 from Homo sapiens (Human).